The sequence spans 310 residues: 4-hydroxy-3-methylbut-2-enyl diphosphate reductase (310 aa).

Cysteine 13 contacts [4Fe-4S] cluster. (2E)-4-hydroxy-3-methylbut-2-enyl diphosphate-binding residues include histidine 42 and histidine 75. 2 residues coordinate dimethylallyl diphosphate: histidine 42 and histidine 75. Positions 42 and 75 each coordinate isopentenyl diphosphate. A [4Fe-4S] cluster-binding site is contributed by cysteine 97. Histidine 125 is a binding site for (2E)-4-hydroxy-3-methylbut-2-enyl diphosphate. Histidine 125 lines the dimethylallyl diphosphate pocket. Isopentenyl diphosphate is bound at residue histidine 125. Glutamate 127 (proton donor) is an active-site residue. Threonine 165 lines the (2E)-4-hydroxy-3-methylbut-2-enyl diphosphate pocket. Cysteine 195 lines the [4Fe-4S] cluster pocket. The (2E)-4-hydroxy-3-methylbut-2-enyl diphosphate site is built by serine 223, serine 224, asparagine 225, and serine 267. Dimethylallyl diphosphate-binding residues include serine 223, serine 224, asparagine 225, and serine 267. Serine 223, serine 224, asparagine 225, and serine 267 together coordinate isopentenyl diphosphate.

Belongs to the IspH family. The cofactor is [4Fe-4S] cluster.

It carries out the reaction isopentenyl diphosphate + 2 oxidized [2Fe-2S]-[ferredoxin] + H2O = (2E)-4-hydroxy-3-methylbut-2-enyl diphosphate + 2 reduced [2Fe-2S]-[ferredoxin] + 2 H(+). The catalysed reaction is dimethylallyl diphosphate + 2 oxidized [2Fe-2S]-[ferredoxin] + H2O = (2E)-4-hydroxy-3-methylbut-2-enyl diphosphate + 2 reduced [2Fe-2S]-[ferredoxin] + 2 H(+). The protein operates within isoprenoid biosynthesis; dimethylallyl diphosphate biosynthesis; dimethylallyl diphosphate from (2E)-4-hydroxy-3-methylbutenyl diphosphate: step 1/1. It participates in isoprenoid biosynthesis; isopentenyl diphosphate biosynthesis via DXP pathway; isopentenyl diphosphate from 1-deoxy-D-xylulose 5-phosphate: step 6/6. Catalyzes the conversion of 1-hydroxy-2-methyl-2-(E)-butenyl 4-diphosphate (HMBPP) into a mixture of isopentenyl diphosphate (IPP) and dimethylallyl diphosphate (DMAPP). Acts in the terminal step of the DOXP/MEP pathway for isoprenoid precursor biosynthesis. The protein is 4-hydroxy-3-methylbut-2-enyl diphosphate reductase of Chlamydia pneumoniae (Chlamydophila pneumoniae).